The following is a 481-amino-acid chain: Arginine biosynthesis bifunctional protein ArgJ, chloroplastic (481 aa).

The substrate site is built by T225, K251, T262, E349, N476, and T481. The active-site Nucleophile is T262.

It belongs to the ArgJ family. As to quaternary structure, heterodimer of an alpha and a beta chain.

Its subcellular location is the plastid. It localises to the chloroplast. It carries out the reaction N(2)-acetyl-L-ornithine + L-glutamate = N-acetyl-L-glutamate + L-ornithine. The enzyme catalyses L-glutamate + acetyl-CoA = N-acetyl-L-glutamate + CoA + H(+). It participates in amino-acid biosynthesis; L-arginine biosynthesis; L-ornithine and N-acetyl-L-glutamate from L-glutamate and N(2)-acetyl-L-ornithine (cyclic): step 1/1. Its pathway is amino-acid biosynthesis; L-arginine biosynthesis; N(2)-acetyl-L-ornithine from L-glutamate: step 1/4. Its function is as follows. Catalyzes two activities which are involved in the cyclic version of arginine biosynthesis: the synthesis of acetylglutamate from glutamate and acetyl-CoA, and of ornithine by transacetylation between acetylornithine and glutamate. The polypeptide is Arginine biosynthesis bifunctional protein ArgJ, chloroplastic (Populus trichocarpa (Western balsam poplar)).